Consider the following 377-residue polypeptide: Probable aspartic-type endopeptidase CTSD (377 aa).

Positions serine 1–alanine 292 constitute a Peptidase A1 domain. The active site involves aspartate 4. Asparagine 58 is a glycosylation site (N-linked (GlcNAc...) asparagine). Aspartate 186 is an active-site residue. Residues tyrosine 296 to alanine 351 are disordered. A compositionally biased stretch (low complexity) spans serine 328–alanine 351. Serine 350 carries GPI-anchor amidated serine lipidation. The propeptide at alanine 351 to aspartate 377 is removed in mature form.

This sequence belongs to the peptidase A1 family.

The protein resides in the cell membrane. Functionally, secreted aspartic-type endopeptidase which is secreted and contributes to virulence. This is Probable aspartic-type endopeptidase CTSD (CTSD) from Arthroderma otae (strain ATCC MYA-4605 / CBS 113480) (Microsporum canis).